The chain runs to 276 residues: uncharacterized protein (276 aa).

This sequence to E.cuniculi ECU05_1600/ECU11_0130.

This is an uncharacterized protein from Encephalitozoon cuniculi (strain GB-M1) (Microsporidian parasite).